Reading from the N-terminus, the 683-residue chain is Glycine--tRNA ligase beta subunit (683 aa).

Belongs to the class-II aminoacyl-tRNA synthetase family. Tetramer of two alpha and two beta subunits.

Its subcellular location is the cytoplasm. The enzyme catalyses tRNA(Gly) + glycine + ATP = glycyl-tRNA(Gly) + AMP + diphosphate. The protein is Glycine--tRNA ligase beta subunit of Pseudomonas putida (strain W619).